A 415-amino-acid polypeptide reads, in one-letter code: Mulatexin (415 aa).

The signal sequence occupies residues 1-21 (MKFRTLLIIFSLVFLLEIVSA). In terms of domain architecture, Chitin-binding type-1 1 spans 23–66 (EPQCGRDAGGALCHGNLCCSHWGFCGTTAIYCDVDQGCQSQCWS). Cystine bridges form between cysteine 26/cysteine 41, cysteine 35/cysteine 47, cysteine 40/cysteine 54, and cysteine 60/cysteine 64. The tract at residues 65–127 (WSSPPPPSPP…PGGPERPDHR (63 aa)) is disordered. A compositionally biased stretch (pro residues) spans 67-121 (SPPPPSPPPPPPSPPPPSPPPPSPPPPSPPPPSPPPPSPPPPSPPPPSPPPPGGP). The 43-residue stretch at 125–167 (DHRCGRALGNPPCNPGRCCSIHNWCGSTAAYCRGSSCQYQCWN) folds into the Chitin-binding type-1 2 domain. Intrachain disulfides connect cysteine 128/cysteine 143, cysteine 137/cysteine 149, cysteine 142/cysteine 156, and cysteine 161/cysteine 165. N-linked (GlcNAc...) asparagine glycosylation occurs at asparagine 264.

Post-translationally, glycosylated.

It is found in the secreted. Functionally, chitin-binding protein which slows larval growth when consumed by the lepidopteran species S.ricini and M.brassica, but not when consumed by the mulberry specialist B.mori. Lacks chitinase activity. This chain is Mulatexin, found in Morus alba (White mulberry).